Here is a 180-residue protein sequence, read N- to C-terminus: ATP-dependent Clp protease proteolytic subunit 2 (180 aa).

Residue S86 is the Nucleophile of the active site. Residue H111 is part of the active site.

Belongs to the peptidase S14 family. Fourteen ClpP subunits assemble into 2 heptameric rings which stack back to back to give a disk-like structure with a central cavity, resembling the structure of eukaryotic proteasomes.

The protein localises to the cytoplasm. The catalysed reaction is Hydrolysis of proteins to small peptides in the presence of ATP and magnesium. alpha-casein is the usual test substrate. In the absence of ATP, only oligopeptides shorter than five residues are hydrolyzed (such as succinyl-Leu-Tyr-|-NHMec, and Leu-Tyr-Leu-|-Tyr-Trp, in which cleavage of the -Tyr-|-Leu- and -Tyr-|-Trp bonds also occurs).. In terms of biological role, cleaves peptides in various proteins in a process that requires ATP hydrolysis. Has a chymotrypsin-like activity. Plays a major role in the degradation of misfolded proteins. This is ATP-dependent Clp protease proteolytic subunit 2 from Tropheryma whipplei (strain Twist) (Whipple's bacillus).